A 366-amino-acid polypeptide reads, in one-letter code: MAEESPKNSAAEIPVTSNGEVGDAHEHGYNRDLKHSLPSGLGLSETQITSHGFDSTKEGVTEAGASQGSSAPPLPCVLSPSRVAASQLTQHAGGQRTHTKGGPVILADEIKNPAMEKLELVRKWSLNTYKCTRQIISEKLGRGSRTVDLELEAQIDILRDNKKKYENILKLAQTLSTQLFQMVHTQKQLGDAFADLSLKSLELHEEFGYNADTQKLLAKNGETLLGAINFFIASVNTLVNKTIEDTLMTVKQYENARIEYDAYRTDLEELNLGPRDANTLPKIEQSQHLFQIHKEKYDKMRSDVSVKLKFLEENKVKVLRNQLALFHSAVAAYFAGNQKQLEQTLKQFHVKLKTPGVDAPSWLEEQ.

Residues 1-78 are disordered; sequence MAEESPKNSA…SSAPPLPCVL (78 aa). Position 2 is an N-acetylalanine (A2). S5 carries the post-translational modification Phosphoserine. Residues 22 to 35 show a composition bias toward basic and acidic residues; sequence GDAHEHGYNRDLKH. S36 and S39 each carry phosphoserine. Positions 44 to 53 are enriched in polar residues; that stretch reads SETQITSHGF. Phosphoserine occurs at positions 69, 79, and 125. Residues 146–346 enclose the AH domain; sequence TVDLELEAQI…NQKQLEQTLK (201 aa). T354 carries the phosphothreonine modification.

As to quaternary structure, forms homodimers or heterodimers with ARFIP2. Interacts with non-myristoylated GTP-bound ARF3, but not to GDP-bound ARF3. Interacts with ARF1. Binds with lower affinity to ARF5 and with very little affinity to ARF6. Interacts with ARL1. Interacts with ATG9A.

The protein localises to the golgi apparatus. It localises to the trans-Golgi network membrane. In terms of biological role, plays a role in controlling biogenesis of secretory granules at the trans-Golgi network. Mechanistically, binds ARF-GTP at the neck of a growing secretory granule precursor and forms a protective scaffold. Once the granule precursor has been completely loaded, active PRKD1 phosphorylates ARFIP1 and releases it from ARFs. In turn, ARFs induce fission. Through this mechanism, ensures proper secretory granule formation at the Golgi of pancreatic beta cells. This chain is Arfaptin-1, found in Rattus norvegicus (Rat).